Consider the following 360-residue polypeptide: MDTQRFVITMNGDNISFIVGDNAINHLSEEAGKYDSIVIMISKTVEEMYANHIPDVGSFGNSVVKISLNDGESLKSLRNYQKIVKVLLERKVDRRSLLVYIGGGTVGDLAGFVASTYKRGVMMIAVPTTLLAQVDSSIGGKNGLDFSDVKNVIGTFYNPYMVIDDTVFLKNNSFIIREGMSEVIKYAIISGGDMYDTLNRCSIDNFDACATNIIKLSVKIKSEIVNRDFYDRTGIRSVLNLGHTIAHGIEGATKGSISHGKAVATGMLVEAHIGEKYGNTNHEVIEAIRDLMKRYGIEELNLKEIGPGNILRYISNDKKIMEGYINMPVPSEIGKVITMKATERMISDGINTFIKENDAS.

Residues 70–75 (DGESLK), 128–129 (TT), Lys-141, and Lys-150 contribute to the NAD(+) site. Zn(2+)-binding residues include Glu-182, His-243, and His-259.

It belongs to the sugar phosphate cyclases superfamily. Dehydroquinate synthase family. The cofactor is NAD(+). Co(2+) is required as a cofactor. Zn(2+) serves as cofactor.

The protein localises to the cytoplasm. The catalysed reaction is 7-phospho-2-dehydro-3-deoxy-D-arabino-heptonate = 3-dehydroquinate + phosphate. Its pathway is metabolic intermediate biosynthesis; chorismate biosynthesis; chorismate from D-erythrose 4-phosphate and phosphoenolpyruvate: step 2/7. In terms of biological role, catalyzes the conversion of 3-deoxy-D-arabino-heptulosonate 7-phosphate (DAHP) to dehydroquinate (DHQ). In Thermoplasma volcanium (strain ATCC 51530 / DSM 4299 / JCM 9571 / NBRC 15438 / GSS1), this protein is 3-dehydroquinate synthase.